Consider the following 952-residue polypeptide: G patch domain-containing protein 1 homolog (952 aa).

6 disordered regions span residues 104 to 127 (QGIRTRDEFANEDEQKQRSDQRRR), 165 to 233 (GWKP…DDYE), 320 to 345 (DKKPKQKKQQHVQQRHVIDGFSEDNS), 370 to 432 (RSRF…KDHS), 660 to 711 (PEKV…RNKP), and 822 to 952 (VAPE…KSKH). Over residues 107–123 (RTRDEFANEDEQKQRSD) the composition is skewed to basic and acidic residues. The 47-residue stretch at 153-199 (RDKVAVRILKSMGWKPGQGVGPRQTRKEKRQATARNSKEQYLMEHYG) folds into the G-patch domain. Residues 214–233 (DSNNEDEDDEDITFAPDDYE) are compositionally biased toward acidic residues. The segment covering 323–333 (PKQKKQQHVQQ) has biased composition (basic residues). Composition is skewed to basic and acidic residues over residues 375–402 (PMDKERAQKLETASEYKRSGLGRHDLNP), 414–432 (QEEKTAEEQPKRNPFKDHS), and 679–691 (IQDKPNTKEEPSK). Low complexity predominate over residues 886–896 (ASSSNESSSSD). Basic residues-rich tracts occupy residues 906–934 (KLSKPKKSHKGSSSKKSKKSKLKSKKKSK) and 941–952 (HKAKKKKKKSKH).

It belongs to the GPATCH1 family.

The sequence is that of G patch domain-containing protein 1 homolog from Drosophila melanogaster (Fruit fly).